The sequence spans 241 residues: MNAESSSQAQNVDHHEIAKFEAVASRWWDLEGEFKPLHRINPLRLNYILQRAGGIFDKTVLDVGCGGGILAESMAREGAQVTGLDMGAEPLQVARLHALESGVNVAYIQETVESHAQANPQRYDVVTCMEMLEHVPDPASVVRACAHLVKPGGHVFFSTINRNTKAWLMAVVGAEYILKMVPQGTHDHKKFIRPSELIGWVDGTPLREKHMIGLHYNPITDHFKLGRNVDVNYMVHTQHEG.

S-adenosyl-L-methionine-binding residues include R44, G64, D85, and M129.

It belongs to the methyltransferase superfamily. UbiG/COQ3 family.

It catalyses the reaction a 3-demethylubiquinol + S-adenosyl-L-methionine = a ubiquinol + S-adenosyl-L-homocysteine + H(+). The catalysed reaction is a 3-(all-trans-polyprenyl)benzene-1,2-diol + S-adenosyl-L-methionine = a 2-methoxy-6-(all-trans-polyprenyl)phenol + S-adenosyl-L-homocysteine + H(+). Its pathway is cofactor biosynthesis; ubiquinone biosynthesis. O-methyltransferase that catalyzes the 2 O-methylation steps in the ubiquinone biosynthetic pathway. This is Ubiquinone biosynthesis O-methyltransferase from Serratia proteamaculans (strain 568).